The primary structure comprises 928 residues: Neuropilin-1 (928 aa).

Positions Met1–Ala21 are cleaved as a signal peptide. The Extracellular portion of the chain corresponds to Ser22–Pro860. 3 cysteine pairs are disulfide-bonded: Cys27-Cys54, Cys82-Cys104, and Cys147-Cys173. CUB domains lie at Cys27–Phe141 and Cys147–Val265. N-linked (GlcNAc...) asparagine glycosylation is present at Asn150. Residues Glu195, Asp209, and Asp250 each contribute to the Ca(2+) site. A disulfide bond links Cys206 and Cys228. N-linked (GlcNAc...) asparagine glycosylation is found at Asn261, Asn300, and Asn523. Intrachain disulfides connect Cys275/Cys424 and Cys431/Cys584. 2 consecutive F5/8 type C domains span residues Cys275–Cys424 and Cys431–Cys584. The O-linked (Xyl...) (chondroitin sulfate) serine; alternate glycan is linked to Ser613. An O-linked (Xyl...) (heparan sulfate) serine; alternate glycan is attached at Ser613. Residues Gly624–Thr645 are disordered. The span at Ala625 to Val635 shows a compositional bias: polar residues. One can recognise an MAM domain in the interval His646–Ala812. Ser834 carries O-linked (Xyl...) (chondroitin sulfate) serine glycosylation. N-linked (GlcNAc...) asparagine glycosylation occurs at Asn844. A helical membrane pass occupies residues Ile861–Leu883. Topologically, residues Tyr884–Ser928 are cytoplasmic.

It belongs to the neuropilin family. Homodimer, and heterodimer. In terms of tissue distribution, retinal ganglion cells and visual center neurons.

The protein resides in the mitochondrion membrane. It localises to the cell membrane. Functionally, receptor involved in the development of the cardiovascular system, in angiogenesis, in the formation of certain neuronal circuits and in organogenesis outside the nervous system. Mediates the chemorepulsant activity of semaphorins. Binding to VEGFA initiates a signaling pathway needed for motor neuron axon guidance and cell body migration, including for the caudal migration of facial motor neurons from rhombomere 4 to rhombomere 6 during embryonic development. Regulates mitochondrial iron transport via interaction. The chain is Neuropilin-1 (nrp1) from Xenopus laevis (African clawed frog).